Here is a 264-residue protein sequence, read N- to C-terminus: Probable pectate lyase D (264 aa).

Positions 1–17 (MFFKQLAVLSFATSALA) are cleaved as a signal peptide. Asn60 carries an N-linked (GlcNAc...) asparagine glycan. A disordered region spans residues 234–264 (YEGTDNNDEEPQEISTGPSNACQYTDPLPSC). Positions 235 to 245 (EGTDNNDEEPQ) are enriched in acidic residues. Over residues 246–256 (EISTGPSNACQ) the composition is skewed to polar residues.

The protein belongs to the polysaccharide lyase 3 family. It depends on Ca(2+) as a cofactor.

Its subcellular location is the secreted. The catalysed reaction is Eliminative cleavage of (1-&gt;4)-alpha-D-galacturonan to give oligosaccharides with 4-deoxy-alpha-D-galact-4-enuronosyl groups at their non-reducing ends.. Pectinolytic enzyme consist of four classes of enzymes: pectin lyase, polygalacturonase, pectin methylesterase and rhamnogalacturonase. Among pectinolytic enzymes, pectin lyase is the most important in depolymerization of pectin, since it cleaves internal glycosidic bonds of highly methylated pectins. Favors pectate, the anion, over pectin, the methyl ester. In Emericella nidulans (strain FGSC A4 / ATCC 38163 / CBS 112.46 / NRRL 194 / M139) (Aspergillus nidulans), this protein is Probable pectate lyase D (plyD).